Reading from the N-terminus, the 178-residue chain is Large ribosomal subunit protein uL16 (178 aa).

Belongs to the universal ribosomal protein uL16 family.

This chain is Large ribosomal subunit protein uL16, found in Saccharolobus solfataricus (strain ATCC 35092 / DSM 1617 / JCM 11322 / P2) (Sulfolobus solfataricus).